Consider the following 385-residue polypeptide: UPF0744 protein YSC83 (385 aa).

The protein belongs to the UPF0744 family.

It localises to the mitochondrion outer membrane. In Saccharomyces cerevisiae (strain ATCC 204508 / S288c) (Baker's yeast), this protein is UPF0744 protein YSC83 (YSC83).